The primary structure comprises 159 residues: S-ribosylhomocysteine lyase (159 aa).

Fe cation is bound by residues His-53, His-57, and Cys-124.

Belongs to the LuxS family. As to quaternary structure, homodimer. It depends on Fe cation as a cofactor.

It carries out the reaction S-(5-deoxy-D-ribos-5-yl)-L-homocysteine = (S)-4,5-dihydroxypentane-2,3-dione + L-homocysteine. Its function is as follows. Involved in the synthesis of autoinducer 2 (AI-2) which is secreted by bacteria and is used to communicate both the cell density and the metabolic potential of the environment. The regulation of gene expression in response to changes in cell density is called quorum sensing. Catalyzes the transformation of S-ribosylhomocysteine (RHC) to homocysteine (HC) and 4,5-dihydroxy-2,3-pentadione (DPD). In Porphyromonas gingivalis (strain ATCC BAA-308 / W83), this protein is S-ribosylhomocysteine lyase.